The sequence spans 221 residues: Thiopurine S-methyltransferase (221 aa).

S-adenosyl-L-methionine-binding residues include W12, L47, E68, and R125.

The protein belongs to the class I-like SAM-binding methyltransferase superfamily. TPMT family.

It localises to the cytoplasm. It catalyses the reaction S-adenosyl-L-methionine + a thiopurine = S-adenosyl-L-homocysteine + a thiopurine S-methylether.. This is Thiopurine S-methyltransferase from Legionella pneumophila (strain Paris).